The chain runs to 62 residues: uncharacterized protein (62 aa).

The protein localises to the mitochondrion. This is an uncharacterized protein from Marchantia polymorpha (Common liverwort).